We begin with the raw amino-acid sequence, 427 residues long: N-formyl-4-amino-5-aminomethyl-2-methylpyrimidine deformylase (427 aa).

Residue H91 coordinates Zn(2+). D93 is a catalytic residue. D124 provides a ligand contact to Zn(2+). Residue E158 is the Proton acceptor of the active site. 3 residues coordinate Zn(2+): E159, D182, and H396.

It belongs to the peptidase M20A family. Requires Zn(2+) as cofactor. It depends on Co(2+) as a cofactor.

It catalyses the reaction N-formyl-4-amino-5-aminomethyl-2-methylpyrimidine + H2O = 4-amino-5-aminomethyl-2-methylpyrimidine + formate. The protein operates within cofactor biosynthesis; thiamine diphosphate biosynthesis. Functionally, catalyzes the deformylation of the formylaminopyrimidine N-formyl-4-amino-5-aminomethyl-2-methylpyrimidine (FAMP) to give the corresponding aminopyrimidine. This chain is N-formyl-4-amino-5-aminomethyl-2-methylpyrimidine deformylase, found in Halalkalibacterium halodurans (strain ATCC BAA-125 / DSM 18197 / FERM 7344 / JCM 9153 / C-125) (Bacillus halodurans).